The primary structure comprises 589 residues: Cytochrome P450 monooxygenase TRI13 (589 aa).

Positions 1–21 (MFLSLCLMVLALYLLYKWALP) are cleaved as a signal peptide. N-linked (GlcNAc...) asparagine glycans are attached at residues Asn-52, Asn-219, Asn-243, and Asn-366. Cys-531 contacts heme.

The protein belongs to the cytochrome P450 family. The cofactor is heme.

Its pathway is sesquiterpene biosynthesis; trichothecene biosynthesis. Functionally, cytochrome P450 monooxygenase; part of the core gene cluster that mediates the biosynthesis of trichothecenes, a very large family of chemically related bicyclic sesquiterpene compounds acting as mycotoxins, including T2-toxin. The biosynthesis of trichothecenes begins with the cyclization of farnesyl diphosphate to trichodiene and is catalyzed by the trichodiene synthase TRI5. Trichodiene undergoes a series of oxygenations catalyzed by the cytochrome P450 monooxygenase TRI4. TRI4 controls the addition of four oxygens at C-2, C-3, C-11, and the C-12, C-13-epoxide to form the intermediate isotrichotriol. Isotrichotriol then undergoes a non-enzymatic isomerization and cyclization to form isotrichodermol. During this process, the oxygen at the C-2 position becomes the pyran ring oxygen and the hydroxyl group at C-11 is lost. More complex type A trichothecenes are built by modifying isotrichodermol through a series of paired hydroxylation and acetylation or acylation steps. Isotrichodermol is converted to isotrichodermin by the acetyltransferase TRI101. TRI101 encodes a C-3 transacetylase that acts as a self-protection or resistance factor during biosynthesis and that the presence of a free C-3 hydroxyl group is a key component of Fusarium trichothecene phytotoxicity. A second hydroxyl group is added to C-15 by the trichothecene C-15 hydroxylase TRI11, producing 15-decalonectrin, which is then acetylated by TRI3, producing calonectrin. A third hydroxyl group is added at C-4 by the cytochrome P450 monooxygenase TRI13, converting calonectrin to 3,15-diacetoxyspirpenol, which is subsequently acetylated by the acetyltransferase TRI7. A fourth hydroxyl group is added to C-8 by the cytochrome P450 monooxygenase TRI1, followed by the addition of an isovaleryl moiety by TRI16. Finally, the acetyl group is removed from the C-3 position by the trichothecene C-3 esterase TRI8 to produce T-2 toxin. This chain is Cytochrome P450 monooxygenase TRI13, found in Fusarium sporotrichioides.